A 453-amino-acid polypeptide reads, in one-letter code: Citrate (Re)-synthase (453 aa).

The 271-residue stretch at 46–316 (IYITDTTFRD…TKNMKLHVIT (271 aa)) folds into the Pyruvate carboxyltransferase domain.

It belongs to the alpha-IPM synthase/homocitrate synthase family. Requires Mn(2+) as cofactor. Co(2+) is required as a cofactor. Mg(2+) serves as cofactor.

The enzyme catalyses oxaloacetate + acetyl-CoA + H2O = citrate + CoA + H(+). Its activity is regulated as follows. Inhibited by p-chloromercuribenzoate (pCMB), EDTA, Zn(2+) ions, and under aerobic conditions. Its function is as follows. Catalyzes the condensation of the acetyl group of acetyl-CoA with oxaloacetate to form citrate. This enzyme is highly Re-face stereospecific with respect to the C-2 of oxaloacetate. This chain is Citrate (Re)-synthase, found in Clostridium kluyveri (strain ATCC 8527 / DSM 555 / NBRC 12016 / NCIMB 10680 / K1).